Here is an 83-residue protein sequence, read N- to C-terminus: Putative potassium channel toxin Ts20 (83 aa).

Positions 1 to 18 are cleaved as a signal peptide; that stretch reads MKLDIVLIMFVTFSTTLA.

Contains 3 disulfide bonds. In terms of tissue distribution, expressed by the venom gland.

The protein resides in the secreted. In terms of biological role, reversibly inhibits potassium channels. The chain is Putative potassium channel toxin Ts20 from Tityus serrulatus (Brazilian scorpion).